Reading from the N-terminus, the 304-residue chain is Elongation factor Ts (304 aa).

The segment at 80 to 83 (TDFV) is involved in Mg(2+) ion dislocation from EF-Tu.

It belongs to the EF-Ts family.

It is found in the cytoplasm. Functionally, associates with the EF-Tu.GDP complex and induces the exchange of GDP to GTP. It remains bound to the aminoacyl-tRNA.EF-Tu.GTP complex up to the GTP hydrolysis stage on the ribosome. This chain is Elongation factor Ts, found in Clostridium tetani (strain Massachusetts / E88).